The chain runs to 447 residues: Argininosuccinate synthase (447 aa).

ATP contacts are provided by residues 20–28 (AFSGGLDTS) and Ala46. Residue Tyr102 participates in L-citrulline binding. ATP contacts are provided by Gly132 and Thr134. The L-aspartate site is built by Thr134, Asn138, and Asp139. Asn138 contacts L-citrulline. An ATP-binding site is contributed by Asp139. The L-citrulline site is built by Arg142 and Ser195. Asp197 is a binding site for ATP. Residues Thr204, Glu206, and Glu283 each contribute to the L-citrulline site.

It belongs to the argininosuccinate synthase family. Type 2 subfamily. Homotetramer.

It is found in the cytoplasm. The enzyme catalyses L-citrulline + L-aspartate + ATP = 2-(N(omega)-L-arginino)succinate + AMP + diphosphate + H(+). Its pathway is amino-acid biosynthesis; L-arginine biosynthesis; L-arginine from L-ornithine and carbamoyl phosphate: step 2/3. In Neisseria meningitidis serogroup C (strain 053442), this protein is Argininosuccinate synthase.